The chain runs to 157 residues: Regulator of Ty1 transposition protein 102 (157 aa).

S77 is modified (phosphoserine). The segment at 95–157 is disordered; that stretch reads SLMTSHTKGD…TKESKDVKMN (63 aa). A compositionally biased stretch (polar residues) spans 96–116; it reads LMTSHTKGDTSKATGAPSANQ. Residue S122 is modified to Phosphoserine. A compositionally biased stretch (basic and acidic residues) spans 147–157; the sequence is NTKESKDVKMN.

Interacts with STH1 and SWI3. Component of the two forms of the RSC complex composed of at least either RSC1 or RSC2, and ARP7, ARP9, LDB7, NPL6, RSC3, RSC30, RSC4, RSC58, RSC6, RSC8, RSC9, SFH1, STH1, HTL1 and probably RTT102. The complexes interact with histone and histone variant components of centromeric chromatin. Probable additional component of the SWI/SNF global transcription activator complex. The 1.14 MDa SWI/SNF complex is composed of 11 different subunits: one copy each of SWI1, SNF2/SWI2, SNF5, SNF12/SWP73, ARP7/SWP61, ARP9/SWP59; two copies each of SWI3, SNF6, SNF11, SWP82; and three copies of TAF14/SWP29.

It localises to the nucleus. Functionally, probable component of the chromatin structure-remodeling complex (RSC) which is involved in transcription regulation and nucleosome positioning. RSC is responsible for the transfer of a histone octamer from a nucleosome core particle to naked DNA. The reaction requires ATP and involves an activated RSC-nucleosome intermediate. Remodeling reaction also involves DNA translocation, DNA twist and conformational change. As a reconfigurer of centromeric and flanking nucleosomes, RSC complex is required both for proper kinetochore function in chromosome segregation and, via a PKC1-dependent signaling pathway, for organization of the cellular cytoskeleton. Probable component of the SWI/SNF complex, an ATP-dependent chromatin-remodeling complex, is required for the positive and negative regulation of gene expression of a large number of genes. It changes chromatin structure by altering DNA-histone contacts within a nucleosome, leading eventually to a change in nucleosome position, thus facilitating or repressing binding of gene-specific transcription factors. This Saccharomyces cerevisiae (strain ATCC 204508 / S288c) (Baker's yeast) protein is Regulator of Ty1 transposition protein 102 (RTT102).